Here is a 405-residue protein sequence, read N- to C-terminus: Argininosuccinate synthase (405 aa).

Position 11-19 (11-19 (AYSGGLDTS)) interacts with ATP. Y90 is a binding site for L-citrulline. G119 is a binding site for ATP. 3 residues coordinate L-aspartate: T121, N125, and D126. Residue N125 participates in L-citrulline binding. Positions 129, 178, 187, 263, and 275 each coordinate L-citrulline.

It belongs to the argininosuccinate synthase family. Type 1 subfamily. As to quaternary structure, homotetramer.

It localises to the cytoplasm. The enzyme catalyses L-citrulline + L-aspartate + ATP = 2-(N(omega)-L-arginino)succinate + AMP + diphosphate + H(+). It functions in the pathway amino-acid biosynthesis; L-arginine biosynthesis; L-arginine from L-ornithine and carbamoyl phosphate: step 2/3. This Legionella pneumophila subsp. pneumophila (strain Philadelphia 1 / ATCC 33152 / DSM 7513) protein is Argininosuccinate synthase.